The primary structure comprises 141 residues: Protein X (141 aa).

Positions 25–48 (SSGPSFPRPAAGSAASSASSPSPS) are enriched in low complexity. Residues 25–52 (SSGPSFPRPAAGSAASSASSPSPSDESD) are disordered. The tract at residues 68 to 113 (PCCLVFTCADLRTMDSTVNFVSWHANRQLGMPSKDLWTPYIKDQLL) is mitochondrial targeting sequence.

It belongs to the orthohepadnavirus protein X family. May form homodimer. May interact with host CEBPA, CFLAR, CREB1, DDB1, E4F1, HBXIP, HSPD1/HSP60, NFKBIA, POLR2E and SMAD4. Interacts with host SMC5-SMC6 complex and induces its degradation. Interacts with host TRPC4AP; leading to prevent ubiquitination of TRPC4AP. Interacts with host PLSCR1; this interaction promotes ubiquitination and degradation of HBx and impairs HBx-mediated cell proliferation. In terms of processing, a fraction may be phosphorylated in insect cells and HepG2 cells, a human hepatoblastoma cell line. Phosphorylated in vitro by host protein kinase C or mitogen-activated protein kinase. N-acetylated in insect cells.

Its subcellular location is the host cytoplasm. The protein localises to the host nucleus. The protein resides in the host mitochondrion. Its function is as follows. Multifunctional protein that plays a role in silencing host antiviral defenses and promoting viral transcription. Does not seem to be essential for HBV infection. May be directly involved in development of cirrhosis and liver cancer (hepatocellular carcinoma). Most of cytosolic activities involve modulation of cytosolic calcium. The effect on apoptosis is controversial depending on the cell types in which the studies have been conducted. May induce apoptosis by localizing in mitochondria and causing loss of mitochondrial membrane potential. May also modulate apoptosis by binding host CFLAR, a key regulator of the death-inducing signaling complex (DISC). Promotes viral transcription by using the host E3 ubiquitin ligase DDB1 to target the SMC5-SMC6 complex to proteasomal degradation. This host complex would otherwise bind to viral episomal DNA, and prevents its transcription. Moderately stimulates transcription of many different viral and cellular transcription elements. Promoters and enhancers stimulated by HBx contain DNA binding sites for NF-kappa-B, AP-1, AP-2, c-EBP, ATF/CREB, or the calcium-activated factor NF-AT. This chain is Protein X, found in Marmota monax (Woodchuck).